Here is a 313-residue protein sequence, read N- to C-terminus: Carbamate kinase 2 (313 aa).

The protein belongs to the carbamate kinase family.

The protein resides in the cytoplasm. It carries out the reaction hydrogencarbonate + NH4(+) + ATP = carbamoyl phosphate + ADP + H2O + H(+). It participates in metabolic intermediate metabolism; carbamoyl phosphate degradation; CO(2) and NH(3) from carbamoyl phosphate: step 1/1. In Staphylococcus aureus (strain bovine RF122 / ET3-1), this protein is Carbamate kinase 2 (arcC2).